A 964-amino-acid polypeptide reads, in one-letter code: Phosphoenolpyruvate carboxylase (964 aa).

Ser-11 is modified (phosphoserine). Residues His-172 and Lys-600 contribute to the active site.

Belongs to the PEPCase type 1 family. As to quaternary structure, homotetramer. Requires Mg(2+) as cofactor.

It localises to the cytoplasm. The enzyme catalyses oxaloacetate + phosphate = phosphoenolpyruvate + hydrogencarbonate. It functions in the pathway photosynthesis; C4 acid pathway. Its activity is regulated as follows. By light-reversible phosphorylation. Through the carboxylation of phosphoenolpyruvate (PEP) it forms oxaloacetate, a four-carbon dicarboxylic acid source for the tricarboxylic acid cycle. This Amaranthus hypochondriacus (Prince-of-Wales feather) protein is Phosphoenolpyruvate carboxylase.